The chain runs to 85 residues: uncharacterized protein (85 aa).

Positions 1-20 are cleaved as a signal peptide; that stretch reads MIKLFCVLAAFISINSACQS.

This is an uncharacterized protein from Invertebrate iridescent virus 6 (IIV-6).